Here is a 392-residue protein sequence, read N- to C-terminus: Y' element ATP-dependent helicase YFL066C (392 aa).

Residues 1-175 (MADTPSVAVQ…LQRIGLTGLA (175 aa)) enclose the Helicase ATP-binding domain. 11–18 (APPGYGKT) lines the ATP pocket. One can recognise a Helicase C-terminal domain in the interval 232-381 (KLLLALFEIE…EFYGLESKKG (150 aa)).

The protein belongs to the helicase family. Yeast subtelomeric Y' repeat subfamily.

Its function is as follows. Catalyzes DNA unwinding and is involved in telomerase-independent telomere maintenance. This is Y' element ATP-dependent helicase YFL066C from Saccharomyces cerevisiae (strain ATCC 204508 / S288c) (Baker's yeast).